Reading from the N-terminus, the 22-residue chain is Cytin chain B (22 aa).

The protein belongs to the protease inhibitor I13 (potato type I serine protease inhibitor) family. Heterodimer of an A chain and a B chain, linked by a disulfide bond.

Functionally, inhibitor of chymotrypsin. The protein is Cytin chain B of Theromyzon tessulatum (Duck leech).